A 329-amino-acid chain; its full sequence is Ketol-acid reductoisomerase (NADP(+)) (329 aa).

Residues 2–182 (ARMYYEKDVD…GATRAGVLET (181 aa)) form the KARI N-terminal Rossmann domain. Residues 25 to 28 (YGSQ), S51, S53, and 83 to 86 (DEKQ) contribute to the NADP(+) site. The active site involves H108. G134 provides a ligand contact to NADP(+). The 146-residue stretch at 183–328 (TFKEETETDL…RNLRSMMSFL (146 aa)) folds into the KARI C-terminal knotted domain. 4 residues coordinate Mg(2+): D191, E195, E227, and E231. Residue S252 participates in substrate binding.

Belongs to the ketol-acid reductoisomerase family. The cofactor is Mg(2+).

It carries out the reaction (2R)-2,3-dihydroxy-3-methylbutanoate + NADP(+) = (2S)-2-acetolactate + NADPH + H(+). The enzyme catalyses (2R,3R)-2,3-dihydroxy-3-methylpentanoate + NADP(+) = (S)-2-ethyl-2-hydroxy-3-oxobutanoate + NADPH + H(+). It participates in amino-acid biosynthesis; L-isoleucine biosynthesis; L-isoleucine from 2-oxobutanoate: step 2/4. Its pathway is amino-acid biosynthesis; L-valine biosynthesis; L-valine from pyruvate: step 2/4. Its function is as follows. Involved in the biosynthesis of branched-chain amino acids (BCAA). Catalyzes an alkyl-migration followed by a ketol-acid reduction of (S)-2-acetolactate (S2AL) to yield (R)-2,3-dihydroxy-isovalerate. In the isomerase reaction, S2AL is rearranged via a Mg-dependent methyl migration to produce 3-hydroxy-3-methyl-2-ketobutyrate (HMKB). In the reductase reaction, this 2-ketoacid undergoes a metal-dependent reduction by NADPH to yield (R)-2,3-dihydroxy-isovalerate. The protein is Ketol-acid reductoisomerase (NADP(+)) of Clostridioides difficile (strain 630) (Peptoclostridium difficile).